Here is a 753-residue protein sequence, read N- to C-terminus: Polyribonucleotide nucleotidyltransferase (753 aa).

Residues Asp488 and Asp494 each contribute to the Mg(2+) site. The KH domain occupies 555-614 (PKLYTMKINPEKIRDVIGKGGSTIRALTEETGTQIDIGEDGTITIASSDAAKADEAKRRI). One can recognise an S1 motif domain in the interval 624–692 (GKIYEGPVTK…EKGRVKLSLK (69 aa)). Positions 692–753 (KALTERPAGM…EGEQQQQQQQ (62 aa)) are disordered. Basic and acidic residues predominate over residues 699 to 739 (AGMERSDRPAPAEREFRQPREPRQQREFREPREPREPRDGG).

It belongs to the polyribonucleotide nucleotidyltransferase family. Mg(2+) serves as cofactor.

It localises to the cytoplasm. The catalysed reaction is RNA(n+1) + phosphate = RNA(n) + a ribonucleoside 5'-diphosphate. In terms of biological role, involved in mRNA degradation. Catalyzes the phosphorolysis of single-stranded polyribonucleotides processively in the 3'- to 5'-direction. The chain is Polyribonucleotide nucleotidyltransferase from Delftia acidovorans (strain DSM 14801 / SPH-1).